Here is a 288-residue protein sequence, read N- to C-terminus: Acetyl-coenzyme A carboxylase carboxyl transferase subunit beta (288 aa).

The CoA carboxyltransferase N-terminal domain maps to 34–288; the sequence is LFSKCPACKV…RLLRMHGGVR (255 aa). Residues cysteine 38, cysteine 41, cysteine 56, and cysteine 59 each coordinate Zn(2+). Residues 38–59 form a C4-type zinc finger; the sequence is CPACKVILYKNDLGLEKTCQHC.

This sequence belongs to the AccD/PCCB family. Acetyl-CoA carboxylase is a heterohexamer composed of biotin carboxyl carrier protein (AccB), biotin carboxylase (AccC) and two subunits each of ACCase subunit alpha (AccA) and ACCase subunit beta (AccD). The cofactor is Zn(2+).

The protein localises to the cytoplasm. The catalysed reaction is N(6)-carboxybiotinyl-L-lysyl-[protein] + acetyl-CoA = N(6)-biotinyl-L-lysyl-[protein] + malonyl-CoA. It functions in the pathway lipid metabolism; malonyl-CoA biosynthesis; malonyl-CoA from acetyl-CoA: step 1/1. Functionally, component of the acetyl coenzyme A carboxylase (ACC) complex. Biotin carboxylase (BC) catalyzes the carboxylation of biotin on its carrier protein (BCCP) and then the CO(2) group is transferred by the transcarboxylase to acetyl-CoA to form malonyl-CoA. This is Acetyl-coenzyme A carboxylase carboxyl transferase subunit beta from Streptococcus suis (strain 98HAH33).